The following is a 450-amino-acid chain: Exodeoxyribonuclease 7 large subunit (450 aa).

The protein belongs to the XseA family. Heterooligomer composed of large and small subunits.

The protein localises to the cytoplasm. It carries out the reaction Exonucleolytic cleavage in either 5'- to 3'- or 3'- to 5'-direction to yield nucleoside 5'-phosphates.. Its function is as follows. Bidirectionally degrades single-stranded DNA into large acid-insoluble oligonucleotides, which are then degraded further into small acid-soluble oligonucleotides. The protein is Exodeoxyribonuclease 7 large subunit of Listeria innocua serovar 6a (strain ATCC BAA-680 / CLIP 11262).